Here is a 1042-residue protein sequence, read N- to C-terminus: Protein phosphatase Slingshot homolog 1 (1042 aa).

Polar residues predominate over residues 1–12; it reads MALVTLQRSPTP. The segment at 1 to 29 is disordered; it reads MALVTLQRSPTPSAASSSASNSELEAGSD. Ala-2 is modified (N-acetylalanine). A compositionally biased stretch (low complexity) spans 13-22; the sequence is SAASSSASNS. Ser-37 and Ser-57 each carry phosphoserine. The DEK-C domain maps to 249-304; that stretch reads ERTERLIKAKLRSIMMSQDLENVTSKEIRNELEKQMNCNLKEFKEFIDNEMLLILG. A Tyrosine-protein phosphatase domain is found at 308-449; the sequence is KPSLIFDHLY…LSEYEGILDA (142 aa). Cys-393 serves as the catalytic Phosphocysteine intermediate. Phosphoserine is present on Ser-516. Disordered regions lie at residues 576 to 609, 668 to 766, 858 to 900, and 915 to 942; these read FGNS…ASTQ, MERH…PHCD, IPEE…LDHT, and PTSS…KPGL. Polar residues predominate over residues 675 to 693; the sequence is SSSAICTQPTFLPHVTSSP. Residues 697 to 712 are compositionally biased toward low complexity; it reads ASSRSRAPERPASGPA. Over residues 886-900 the composition is skewed to polar residues; that stretch reads LQKSPTSTLPRLDHT. Ser-889 bears the Phosphoserine mark. An interaction with YWHAG region spans residues 889–1042; sequence SPTSTLPRLD…LKSPSRVNKS (154 aa). Low complexity predominate over residues 917–935; that stretch reads SSSISSNLTRSSSSDSIHS. Ser-970 is subject to Phosphoserine. Positions 985-995 are enriched in polar residues; sequence SSEADTSTIAD. Positions 985–1042 are disordered; it reads SSEADTSTIADSQDAKCGLSSSFLPEPQSAPRDPAATSKSSGKSAPEHLKSPSRVNKS.

The protein belongs to the protein-tyrosine phosphatase family. Interacts with the 14-3-3 proteins YWHAB, YWHAG, YWHAQ, and YWHAZ. Interaction with 14-3-3 proteins inhibits phosphatase activity and also blocks recruitment to lamellipodia and stimulation by actin. Interacts with actin and this stimulates phosphatase activity. Interacts with LIMK1. Phosphorylated. Inhibitory phosphorylation by PAK4 promotes binding to YWHAZ. Phosphorylation at Ser-970 is decreased by stimuli which promote actin reorganization and lamellipodia formation. Can be dephosphorylated and activated by PPP3CA/calcineurin A. Phosphorylation decreases immediately prior to telophase. In terms of tissue distribution, expressed in brain, heart, kidney and thymus. Also expressed at lower levels in liver, skeletal muscle, small intestine and spleen.

The protein localises to the cytoplasm. It localises to the cytoskeleton. It is found in the cleavage furrow. Its subcellular location is the midbody. It carries out the reaction O-phospho-L-tyrosyl-[protein] + H2O = L-tyrosyl-[protein] + phosphate. The catalysed reaction is O-phospho-L-seryl-[protein] + H2O = L-seryl-[protein] + phosphate. It catalyses the reaction O-phospho-L-threonyl-[protein] + H2O = L-threonyl-[protein] + phosphate. Its function is as follows. Protein phosphatase which regulates actin filament dynamics. Dephosphorylates and activates the actin binding/depolymerizing factor cofilin, which subsequently binds to actin filaments and stimulates their disassembly. Inhibitory phosphorylation of cofilin is mediated by LIMK1, which may also be dephosphorylated and inactivated by this protein. The polypeptide is Protein phosphatase Slingshot homolog 1 (Mus musculus (Mouse)).